The following is a 328-amino-acid chain: DNA-directed RNA polymerase subunit alpha (328 aa).

The interval 1-234 is alpha N-terminal domain (alpha-NTD); sequence MQNSPTEYLK…GQLSVFADLE (234 aa). Residues 248 to 328 are alpha C-terminal domain (alpha-CTD); that stretch reads VDPILLRPVD…NWPPAGLEKV (81 aa).

This sequence belongs to the RNA polymerase alpha chain family. In terms of assembly, homodimer. The RNAP catalytic core consists of 2 alpha, 1 beta, 1 beta' and 1 omega subunit. When a sigma factor is associated with the core the holoenzyme is formed, which can initiate transcription.

It catalyses the reaction RNA(n) + a ribonucleoside 5'-triphosphate = RNA(n+1) + diphosphate. In terms of biological role, DNA-dependent RNA polymerase catalyzes the transcription of DNA into RNA using the four ribonucleoside triphosphates as substrates. This chain is DNA-directed RNA polymerase subunit alpha, found in Methylobacillus flagellatus (strain ATCC 51484 / DSM 6875 / VKM B-1610 / KT).